A 539-amino-acid chain; its full sequence is Phosphoenolpyruvate carboxykinase (ATP) (539 aa).

Residues Arg64, Tyr206, and Lys212 each coordinate substrate. ATP contacts are provided by residues Lys212, His231, and 247-255; that span reads GLSGTGKTT. Residues Lys212 and His231 each coordinate Mn(2+). Asp268 contributes to the Mn(2+) binding site. Residues Glu296, Arg332, 448–449, and Thr454 contribute to the ATP site; that span reads RI. Residue Arg332 participates in substrate binding.

Belongs to the phosphoenolpyruvate carboxykinase (ATP) family. In terms of assembly, monomer. It depends on Mn(2+) as a cofactor.

The protein localises to the cytoplasm. The catalysed reaction is oxaloacetate + ATP = phosphoenolpyruvate + ADP + CO2. It participates in carbohydrate biosynthesis; gluconeogenesis. Its function is as follows. Involved in the gluconeogenesis. Catalyzes the conversion of oxaloacetate (OAA) to phosphoenolpyruvate (PEP) through direct phosphoryl transfer between the nucleoside triphosphate and OAA. The polypeptide is Phosphoenolpyruvate carboxykinase (ATP) (Yersinia enterocolitica serotype O:8 / biotype 1B (strain NCTC 13174 / 8081)).